A 339-amino-acid chain; its full sequence is Agamous-like MADS-box protein AGL86 (339 aa).

In terms of domain architecture, MADS-box spans 1 to 60; sequence MRSKIKLSLIANKTSRRTTFRKRKGGITNKLHELTTLCGVKACAVISSPYENPVVWPSTE. Residues 86-112 are a coiled coil; the sequence is TYLQDKITKETKKLESLRRENRESQLR.

As to quaternary structure, interacts with AGL61/DIANA and AGL62.

The protein localises to the nucleus. Functionally, probable transcription factor. In Arabidopsis thaliana (Mouse-ear cress), this protein is Agamous-like MADS-box protein AGL86 (AGL86).